Consider the following 545-residue polypeptide: CTP synthase (545 aa).

An amidoligase domain region spans residues methionine 1–isoleucine 266. A CTP-binding site is contributed by serine 14. Serine 14 provides a ligand contact to UTP. ATP-binding positions include serine 15–isoleucine 20 and aspartate 72. Aspartate 72 and glutamate 140 together coordinate Mg(2+). Residues aspartate 147 to glutamate 149, lysine 187 to glutamine 192, and lysine 223 each bind CTP. UTP is bound by residues lysine 187 to glutamine 192 and lysine 223. Lysine 239–valine 241 contributes to the ATP binding site. Residues threonine 291–arginine 542 enclose the Glutamine amidotransferase type-1 domain. Residue glycine 352 participates in L-glutamine binding. Residue cysteine 379 is the Nucleophile; for glutamine hydrolysis of the active site. L-glutamine-binding positions include leucine 380–glutamine 383, glutamate 403, and arginine 470. Residues histidine 515 and glutamate 517 contribute to the active site.

Belongs to the CTP synthase family. In terms of assembly, homotetramer.

The catalysed reaction is UTP + L-glutamine + ATP + H2O = CTP + L-glutamate + ADP + phosphate + 2 H(+). The enzyme catalyses L-glutamine + H2O = L-glutamate + NH4(+). It carries out the reaction UTP + NH4(+) + ATP = CTP + ADP + phosphate + 2 H(+). Its pathway is pyrimidine metabolism; CTP biosynthesis via de novo pathway; CTP from UDP: step 2/2. Allosterically activated by GTP, when glutamine is the substrate; GTP has no effect on the reaction when ammonia is the substrate. The allosteric effector GTP functions by stabilizing the protein conformation that binds the tetrahedral intermediate(s) formed during glutamine hydrolysis. Inhibited by the product CTP, via allosteric rather than competitive inhibition. Functionally, catalyzes the ATP-dependent amination of UTP to CTP with either L-glutamine or ammonia as the source of nitrogen. Regulates intracellular CTP levels through interactions with the four ribonucleotide triphosphates. This Shewanella woodyi (strain ATCC 51908 / MS32) protein is CTP synthase.